A 434-amino-acid polypeptide reads, in one-letter code: MMKAEGIPGIEQFASPGKGRGLRVSRAYGVGELLFSCPAYSYVLSVGERGLICEQCFTRKKGLAKCGKCKKAFYCNANCQKKNWPMHKLECQAMCAFGENWRPSETVRLVARIIARLKAQKERSPSEILLLLGEMEAHLEDMDNEKREMTEAHIAGLHQFYSKHLDFPDHQALLTLFSQVHCNGFTVEDEELSNLGLAIFPDIALLNHSCSPNVIVTYRGINAEVRAVKDISPGQEIYTSYIDLLYPTADRLERLRDMYYFSCDCKECTTKSMDVVKMSVRKRSDEIGEKEIKDMVRYARNSMENFRRAKQDKSPTELLEMCELSIDKMSTVFDDSNVYILHMMYQAMGICLFTEDYEGAVRYGEKVIKPFTVLYPAYSMNVASMFLKLGRLYIALDRKLAGIDAFQKALTIMEVVHGKDHTYVTELKQEMRDF.

The SET domain maps to 8–242 (PGIEQFASPG…PGQEIYTSYI (235 aa)). 18 to 20 (KGR) contacts S-adenosyl-L-methionine. Positions 53, 56, 66, 69, 75, 79, 87, and 91 each coordinate Zn(2+). The MYND-type zinc-finger motif lies at 53 to 91 (CEQCFTRKKGLAKCGKCKKAFYCNANCQKKNWPMHKLEC). S-adenosyl-L-methionine-binding positions include H138, 207–208 (NH), and 259–261 (YYF).

The protein belongs to the class V-like SAM-binding methyltransferase superfamily.

It is found in the cytoplasm. It localises to the cytosol. Its subcellular location is the nucleus. The catalysed reaction is L-lysyl(4)-[histone H3] + 3 S-adenosyl-L-methionine = N(6),N(6),N(6)-trimethyl-L-lysyl(4)-[histone H3] + 3 S-adenosyl-L-homocysteine + 3 H(+). The enzyme catalyses L-lysyl-[protein] + S-adenosyl-L-methionine = N(6)-methyl-L-lysyl-[protein] + S-adenosyl-L-homocysteine + H(+). In terms of biological role, protein-lysine N-methyltransferase that methylates both histones and non-histone proteins, including p53/TP53 and RB1. Specifically trimethylates histone H3 'Lys-4' (H3K4me3) in vivo. The activity requires interaction with HSP90alpha. Shows even higher methyltransferase activity on p53/TP53. Monomethylates 'Lys-370' of p53/TP53, leading to decreased DNA-binding activity and subsequent transcriptional regulation activity of p53/TP53. Monomethylates RB1 at 'Lys-860'. This chain is N-lysine methyltransferase SMYD2-B (smyd2b), found in Danio rerio (Zebrafish).